We begin with the raw amino-acid sequence, 334 residues long: MITIGIETSCDETSVSLLEDGNKILSNLVSSQVEIHKTFGGVVPEVASRIHVEVLNRLIELALEKAKKEFTDIDLIAVTQGPGLIGALWIGIMAAKTLSLALNKPLIGVNHLEGHIFANFLGEDPPTFPFIALIVSGGHTEYILVEDIGVYKILGQTLDDAAGEAFDKVARILGLNYPGGPEIDKISKMGKPIFNFPKIKCDRELDISFSGIKTAVLYLVRDLKKEGKEIPVADIAASFQERVVEELLERAFLALNKFNIKTLVVSGGVASNSYLQRRFKEESRKEGIKLYIPPPYLCTDNGAMIACAGYHLYQKGYKSDLYLSANPDLLLGER.

Residues histidine 111 and histidine 115 each coordinate Fe cation. Residues 134–138 (IVSGG), aspartate 167, glycine 180, aspartate 184, and asparagine 272 contribute to the substrate site. Residue aspartate 300 coordinates Fe cation.

The protein belongs to the KAE1 / TsaD family. It depends on Fe(2+) as a cofactor.

It localises to the cytoplasm. It catalyses the reaction L-threonylcarbamoyladenylate + adenosine(37) in tRNA = N(6)-L-threonylcarbamoyladenosine(37) in tRNA + AMP + H(+). Its function is as follows. Required for the formation of a threonylcarbamoyl group on adenosine at position 37 (t(6)A37) in tRNAs that read codons beginning with adenine. Is involved in the transfer of the threonylcarbamoyl moiety of threonylcarbamoyl-AMP (TC-AMP) to the N6 group of A37, together with TsaE and TsaB. TsaD likely plays a direct catalytic role in this reaction. The chain is tRNA N6-adenosine threonylcarbamoyltransferase from Dictyoglomus turgidum (strain DSM 6724 / Z-1310).